We begin with the raw amino-acid sequence, 212 residues long: Uridine kinase (212 aa).

ATP is bound at residue 13–20 (GGSGSGKT).

Belongs to the uridine kinase family.

The protein localises to the cytoplasm. The catalysed reaction is uridine + ATP = UMP + ADP + H(+). It carries out the reaction cytidine + ATP = CMP + ADP + H(+). The protein operates within pyrimidine metabolism; CTP biosynthesis via salvage pathway; CTP from cytidine: step 1/3. Its pathway is pyrimidine metabolism; UMP biosynthesis via salvage pathway; UMP from uridine: step 1/1. The polypeptide is Uridine kinase (Bacillus cereus (strain ATCC 10987 / NRS 248)).